The sequence spans 220 residues: Cell surface glycolipoprotein MPB83 (220 aa).

An N-terminal signal peptide occupies residues 1–24; it reads MINVQAKPAAAASLAAIAIAFLAG. Cys25 carries the N-palmitoyl cysteine lipid modification. Cys25 is lipidated: S-diacylglycerol cysteine. O-linked (Man...) threonine glycosylation is found at Thr48 and Thr49. The region spanning 83 to 215 is the FAS1 domain; the sequence is QDPVATAASN…ATVYMIDTVL (133 aa).

As to quaternary structure, interacts with host (human) TLR2. Post-translationally, O-glycosylated. Contains 0-3 mannose residues attached to residues 48-49 in various configurations; the dominant glycoform is Thr-48(Man)/Thr-49(Man2) with an unusual Man(1-&gt;3)Man linkage, but Thr48(Man3)/Thr49(Man0) through to Thr48(Man0/)Thr49(Man3) are also seen. In terms of processing, when isolated from culture filtrate runs as 25 and 23 kDa proteins; the larger protein is much less abundant, mostly associated with the cell and starts at residue 28, the shorter is more abundant and starts at residue 48.

It is found in the cell membrane. Its subcellular location is the secreted. It localises to the cell wall. Induces expression of human (host) matrix metalloproteinase-9 (MMP9) in a TLR1/TLR2-dependent fashion; the acylated 20 first mature residues (residues 25-40) induce the most expression, but whole recombinant protein (non-acylated and non-glycosylated), and mannosylated but not acylated protein (residues 26-220) also induce expression. This chain is Cell surface glycolipoprotein MPB83 (mpb83), found in Mycobacterium bovis (strain ATCC BAA-935 / AF2122/97).